Reading from the N-terminus, the 245-residue chain is Membrane-spanning 4-domains subfamily A member 15 (245 aa).

The disordered stretch occupies residues 1–30 (MWERRGRGESAAGTAAVASRNASGLRPPPA). A run of 4 helical transmembrane segments spans residues 78–98 (GTVQ…LLMV), 103–123 (LGML…FIIS), 147–167 (ILSA…FGVT), and 176–196 (LAVL…ATHF).

It belongs to the MS4A family.

It localises to the membrane. Its function is as follows. May be involved in signal transduction as a component of a multimeric receptor complex. The protein is Membrane-spanning 4-domains subfamily A member 15 (Ms4a15) of Mus musculus (Mouse).